The chain runs to 356 residues: Serendipity locus protein beta (356 aa).

A C2H2-type 1; degenerate zinc finger spans residues 171-193 (IPCHICGEMFSSQEVLERHIKAD). C2H2-type zinc fingers lie at residues 201–223 (ATCN…MNLH), 229–251 (LECR…MEVH), 257–279 (YQCD…LMRH), 286–308 (LICE…LRTH), and 315–337 (YPCP…KRVH).

Binds chromatin; requires N-terminal regions to form protein-protein contacts, in addition to DNA specific recognition by the zinc fingers.

The protein localises to the nucleus. Its function is as follows. Binds to the consensus DNA sequence 5'-YCAGAGATGCGCA-3'. In Drosophila melanogaster (Fruit fly), this protein is Serendipity locus protein beta (Sry-beta).